The following is a 66-amino-acid chain: Phylloseptin-S4 (66 aa).

Residues M1–C22 form the signal peptide. Residues E23–R46 constitute a propeptide that is removed on maturation. The tract at residues E25–E44 is disordered. Acidic residues predominate over residues E30–K41. Residue L65 is modified to Leucine amide.

In terms of tissue distribution, expressed by the skin glands.

Its subcellular location is the secreted. It is found in the target cell membrane. Its function is as follows. Antimicrobial peptide with high activity against Gram-positive bacteria, moderate activity against Gram-negative bacteria, and moderate activity against fungi. Acts by causing bacterial membrane disruption inducing leakage of the intracellular content followed by cell death. It adopts an alpha-helical amphipathic structure in membrane environments. Also shows highly potent antiparasitic activity against Leishmania species. Shows moderate hemolytic activity on human erythrocytes (LC(50)=33 uM). Is also active on human monocytes (IC(50)=23 uM). The polypeptide is Phylloseptin-S4 (Phyllomedusa sauvagei (Sauvage's leaf frog)).